The sequence spans 4857 residues: Dual E2 ubiquitin-conjugating enzyme/E3 ubiquitin-protein ligase BIRC6 (4857 aa).

2 WD repeats span residues 68 to 106 (DGLH…QASA) and 107 to 136 (LSAK…AVGC). A BIR repeat occupies 268 to 377 (PELGVGPGRS…LSVTLATSPA (110 aa)). Residues Cys-328, Cys-331, His-348, and Cys-355 each coordinate Zn(2+). The stretch at 379–426 (FPCTDGTDRISCFGSGSCPHFLAAATKRGKICIWDVSKLMKVHLKFEI) is one WD 3 repeat. 2 disordered regions span residues 465 to 498 (DIPK…TSQK) and 579 to 618 (ATSP…NSEL). A compositionally biased stretch (acidic residues) spans 472-482 (DSDDLLEDSDS). Residues Ser-473, Ser-480, Ser-482, Ser-581, and Ser-590 each carry the phosphoserine modification. WD repeat units follow at residues 501–720 (MEVS…VQCL), 730–850 (NLCI…QHIK), 851–927 (DPQD…AKVE), and 928–966 (PPKK…FLQI). Residues 579–588 (ATSPISSNSH) are compositionally biased toward polar residues. Residues 595-618 (SRTQGESISEQGSTDNESCTNSEL) show a composition bias toward polar residues. Disordered stretches follow at residues 984–1004 (LSKG…PSSP) and 1053–1073 (QQQR…AAQH). The segment covering 992 to 1004 (SEGSKPLSNPSSP) has biased composition (polar residues). Basic residues predominate over residues 1056-1065 (RRHPQHLHQQ). At Thr-1710 the chain carries Phosphothreonine. Phosphoserine occurs at positions 2222 and 2955. The tract at residues 2945–2973 (SVTTNTTDSVSDEEKVSGGKDGNGSSTSV) is disordered. The interval 3189-3193 (HRRAR) is HRRAR loop; important for DIABLO/SMAC and HTRA2 binding. The Ubiquitin-like domain maps to 3819 to 4068 (DEKVTMFLQS…ESLLETCPIQ (250 aa)). Residues 3923-3949 (QSKRAVSATPPRPPSRRGRTIPDKIGS) are disordered. At Thr-3931 the chain carries Phosphothreonine. Ser-4023 is modified (phosphoserine). A disordered region spans residues 4260-4283 (RVPNSSVNQTEPQVSSSHNPTSTE). The span at 4261-4283 (VPNSSVNQTEPQVSSSHNPTSTE) shows a compositional bias: polar residues. Residues 4573-4740 (ARARRLAQEA…IRQATVKWAM (168 aa)) enclose the UBC core domain. Catalysis depends on Cys-4666, which acts as the Glycyl thioester intermediate. The segment at 4835 to 4857 (EETLMHDQVKPSSSKELPSDFQL) is disordered. A compositionally biased stretch (polar residues) spans 4844–4857 (KPSSSKELPSDFQL).

The protein belongs to the BIRC6 family. Homodimer; antiparallel. Interacts with RNF41. Interacts with DIABLO/SMAC, likely with higher affinity to SMAC dimer than SMAC monomer; this interaction blocks the substrate-binding site and inhibits the caspase inhibition activity of BIRC6. Interacts with KIF23/MKLP1, USP8/UBPY, BIRC5/survivin, MAP2K1/MEK1, RAB8A/RAB8, RAB11A/RAB11, PLK1, EXOC3/SEC6 and EXOC4/SEC8. Ubiquitinated; mediated by RNF41 E3 ligase and leads to proteasomal degradation, impairing inhibition of apoptosis. Deubiquitinated by USP8/UBPY. Autoubiquitinated; mediated by E1 ubiquitin activating enzyme UBA6. Post-translationally, proteolytically cleaved. Acts as substrate for CASP3, CASP6, CASP7, CASP9 and HTRA2. Expressed in brain cancer cells.

It localises to the golgi apparatus. The protein resides in the trans-Golgi network membrane. The protein localises to the endosome. Its subcellular location is the cytoplasm. It is found in the cytoskeleton. It localises to the spindle pole. The protein resides in the microtubule organizing center. The protein localises to the centrosome. Its subcellular location is the midbody. It is found in the midbody ring. It carries out the reaction S-ubiquitinyl-[E1 ubiquitin-activating enzyme]-L-cysteine + [acceptor protein]-L-lysine = [E1 ubiquitin-activating enzyme]-L-cysteine + N(6)-monoubiquitinyl-[acceptor protein]-L-lysine.. With respect to regulation, inhibited by DIABLO/SMAC, which competes for the substrate-binding sites on BIRC6. BIRC6 inhibits caspases and protease by ubiquitination but BIRC6 itself is subjected to protease cleavage by CASP3, CASP6, CASP7, CASP9 and HTRA2 by protease cleavage. Anti-apoptotic protein known as inhibitor of apoptosis (IAP) which can regulate cell death by controlling caspases and by acting as an E3 ubiquitin-protein ligase. Unlike most IAPs, does not contain a RING domain and it is not a RING-type E3 ligase. Instead acts as a dual E2/E3 enzyme that combines ubiquitin conjugating (E2) and ubiquitin ligase (E3) activities in a single polypeptide. Ubiquitination is mediated by a non-canonical E1 ubiquitin activating enzyme UBA6. Ubiquitinates CASP3, CASP7 and CASP9 and inhibits their caspase activity; also ubiquitinates their procaspases but to a weaker extent. Ubiquitinates pro-apoptotic factors DIABLO/SMAC and HTRA2. DIABLO/SMAC antagonizes the caspase inhibition activity of BIRC6 by competing for the same binding sites as the caspases. Ubiquitinates the autophagy protein MAP1LC3B; this activity is also inhibited by DIABLO/SMAC. Important regulator for the final stages of cytokinesis. Crucial for normal vesicle targeting to the site of abscission, but also for the integrity of the midbody and the midbody ring, and its striking ubiquitin modification. This is Dual E2 ubiquitin-conjugating enzyme/E3 ubiquitin-protein ligase BIRC6 (BIRC6) from Homo sapiens (Human).